A 164-amino-acid chain; its full sequence is ATP synthase subunit b (164 aa).

Residues 8 to 28 traverse the membrane as a helical segment; the sequence is FGIIFWQTITLLFVLFILGKF.

Belongs to the ATPase B chain family. In terms of assembly, F-type ATPases have 2 components, F(1) - the catalytic core - and F(0) - the membrane proton channel. F(1) has five subunits: alpha(3), beta(3), gamma(1), delta(1), epsilon(1). F(0) has three main subunits: a(1), b(2) and c(10-14). The alpha and beta chains form an alternating ring which encloses part of the gamma chain. F(1) is attached to F(0) by a central stalk formed by the gamma and epsilon chains, while a peripheral stalk is formed by the delta and b chains.

Its subcellular location is the cell membrane. In terms of biological role, f(1)F(0) ATP synthase produces ATP from ADP in the presence of a proton or sodium gradient. F-type ATPases consist of two structural domains, F(1) containing the extramembraneous catalytic core and F(0) containing the membrane proton channel, linked together by a central stalk and a peripheral stalk. During catalysis, ATP synthesis in the catalytic domain of F(1) is coupled via a rotary mechanism of the central stalk subunits to proton translocation. Component of the F(0) channel, it forms part of the peripheral stalk, linking F(1) to F(0). The protein is ATP synthase subunit b of Amoebophilus asiaticus (strain 5a2).